The following is a 640-amino-acid chain: Probable potassium transport system protein Kup 1 (640 aa).

Helical transmembrane passes span 24-44, 67-87, 116-136, 154-174, 186-206, 222-242, 264-284, 296-316, 354-374, 382-402, 411-431, and 436-456; these read LGAL…TSPL, IASL…VLFV, VGPL…DGMI, PFFA…LFTI, FGPV…TEVV, TFLF…VLAV, WFAL…ALIL, MLVP…ATVI, IYIP…VVGF, AAYG…ALVV, LWLC…FLGA, and VTQG…LMAT.

This sequence belongs to the HAK/KUP transporter (TC 2.A.72) family.

It is found in the cell inner membrane. It carries out the reaction K(+)(in) + H(+)(in) = K(+)(out) + H(+)(out). Its function is as follows. Transport of potassium into the cell. Likely operates as a K(+):H(+) symporter. In Paramagnetospirillum magneticum (strain ATCC 700264 / AMB-1) (Magnetospirillum magneticum), this protein is Probable potassium transport system protein Kup 1.